The following is a 361-amino-acid chain: Phospho-N-acetylmuramoyl-pentapeptide-transferase (361 aa).

The next 10 membrane-spanning stretches (helical) occupy residues 28–48 (LAIL…IRWL), 73–93 (TMGG…WGNL), 98–118 (MWIM…DDYL), 132–152 (YKLF…YFNP), 168–188 (WLID…VGSS), 199–219 (GLAA…LYIS), 235–255 (GTGE…GFLW), 263–283 (VFMG…LAVI), 288–308 (IVLA…ILQV), and 338–358 (KVIV…LLTL).

This sequence belongs to the glycosyltransferase 4 family. MraY subfamily. Mg(2+) serves as cofactor.

It is found in the cell inner membrane. It carries out the reaction UDP-N-acetyl-alpha-D-muramoyl-L-alanyl-gamma-D-glutamyl-meso-2,6-diaminopimeloyl-D-alanyl-D-alanine + di-trans,octa-cis-undecaprenyl phosphate = di-trans,octa-cis-undecaprenyl diphospho-N-acetyl-alpha-D-muramoyl-L-alanyl-D-glutamyl-meso-2,6-diaminopimeloyl-D-alanyl-D-alanine + UMP. It functions in the pathway cell wall biogenesis; peptidoglycan biosynthesis. Functionally, catalyzes the initial step of the lipid cycle reactions in the biosynthesis of the cell wall peptidoglycan: transfers peptidoglycan precursor phospho-MurNAc-pentapeptide from UDP-MurNAc-pentapeptide onto the lipid carrier undecaprenyl phosphate, yielding undecaprenyl-pyrophosphoryl-MurNAc-pentapeptide, known as lipid I. The polypeptide is Phospho-N-acetylmuramoyl-pentapeptide-transferase (Thermodesulfovibrio yellowstonii (strain ATCC 51303 / DSM 11347 / YP87)).